The sequence spans 394 residues: NAD(P)H-quinone oxidoreductase subunit H (394 aa).

Belongs to the complex I 49 kDa subunit family. In terms of assembly, NDH-1 can be composed of about 15 different subunits; different subcomplexes with different compositions have been identified which probably have different functions.

Its subcellular location is the cellular thylakoid membrane. It catalyses the reaction a plastoquinone + NADH + (n+1) H(+)(in) = a plastoquinol + NAD(+) + n H(+)(out). The catalysed reaction is a plastoquinone + NADPH + (n+1) H(+)(in) = a plastoquinol + NADP(+) + n H(+)(out). Its function is as follows. NDH-1 shuttles electrons from an unknown electron donor, via FMN and iron-sulfur (Fe-S) centers, to quinones in the respiratory and/or the photosynthetic chain. The immediate electron acceptor for the enzyme in this species is believed to be plastoquinone. Couples the redox reaction to proton translocation, and thus conserves the redox energy in a proton gradient. Cyanobacterial NDH-1 also plays a role in inorganic carbon-concentration. This Prochlorococcus marinus (strain MIT 9211) protein is NAD(P)H-quinone oxidoreductase subunit H.